The sequence spans 241 residues: Triosephosphate isomerase (241 aa).

8–10 (NWK) is a binding site for substrate. Residue H93 is the Electrophile of the active site. E163 serves as the catalytic Proton acceptor. Residues G169, S205, and 226 to 227 (GG) each bind substrate.

This sequence belongs to the triosephosphate isomerase family. As to quaternary structure, homodimer.

The protein localises to the cytoplasm. It carries out the reaction D-glyceraldehyde 3-phosphate = dihydroxyacetone phosphate. The protein operates within carbohydrate biosynthesis; gluconeogenesis. It functions in the pathway carbohydrate degradation; glycolysis; D-glyceraldehyde 3-phosphate from glycerone phosphate: step 1/1. Functionally, involved in the gluconeogenesis. Catalyzes stereospecifically the conversion of dihydroxyacetone phosphate (DHAP) to D-glyceraldehyde-3-phosphate (G3P). The protein is Triosephosphate isomerase of Bdellovibrio bacteriovorus (strain ATCC 15356 / DSM 50701 / NCIMB 9529 / HD100).